A 641-amino-acid polypeptide reads, in one-letter code: Phosphomethylpyrimidine synthase (641 aa).

The span at 1-12 shows a compositional bias: polar residues; sequence MTDTSTQNTATP. The tract at residues 1–25 is disordered; it reads MTDTSTQNTATPTDEYGAEIHPKHS. Residues Asn-200, Met-229, Tyr-258, His-294, 314–316, 355–358, and Glu-394 contribute to the substrate site; these read SRG and DGLR. His-398 is a Zn(2+) binding site. Tyr-421 lines the substrate pocket. His-462 lines the Zn(2+) pocket. Cys-542, Cys-545, and Cys-550 together coordinate [4Fe-4S] cluster.

The protein belongs to the ThiC family. [4Fe-4S] cluster is required as a cofactor.

It catalyses the reaction 5-amino-1-(5-phospho-beta-D-ribosyl)imidazole + S-adenosyl-L-methionine = 4-amino-2-methyl-5-(phosphooxymethyl)pyrimidine + CO + 5'-deoxyadenosine + formate + L-methionine + 3 H(+). It participates in cofactor biosynthesis; thiamine diphosphate biosynthesis. In terms of biological role, catalyzes the synthesis of the hydroxymethylpyrimidine phosphate (HMP-P) moiety of thiamine from aminoimidazole ribotide (AIR) in a radical S-adenosyl-L-methionine (SAM)-dependent reaction. The chain is Phosphomethylpyrimidine synthase from Corynebacterium jeikeium (strain K411).